The chain runs to 424 residues: Glutamyl-tRNA reductase (424 aa).

Residues 49–52 (TCNR), Ser-105, 110–112 (EPQ), and Gln-116 contribute to the substrate site. The active-site Nucleophile is Cys-50. NADP(+) is bound at residue 185–190 (GSGETA).

Belongs to the glutamyl-tRNA reductase family. Homodimer.

The catalysed reaction is (S)-4-amino-5-oxopentanoate + tRNA(Glu) + NADP(+) = L-glutamyl-tRNA(Glu) + NADPH + H(+). The protein operates within porphyrin-containing compound metabolism; protoporphyrin-IX biosynthesis; 5-aminolevulinate from L-glutamyl-tRNA(Glu): step 1/2. Catalyzes the NADPH-dependent reduction of glutamyl-tRNA(Glu) to glutamate 1-semialdehyde (GSA). This chain is Glutamyl-tRNA reductase, found in Legionella pneumophila (strain Lens).